The chain runs to 427 residues: MKLETKAQGLRGSLRIPGDKSISHRSIMFGSLAKGVTTVRDILRGEDVLSTMQVFRDLGVTIEDDGDVVRIHGVGFDGLKAPQNKLDMGNSGTSIRLISGVLAGQDFDVEMFGDDSLSKRPMDRVTIPLRQMGVEVSGQTDRDLPPLKMHGSKSLKPIYYELPVASAQVKSALIFAALQADGESVIIEKEKTRNHTEDMIQQFGGQLQVEGKEIRISGGQTFTAQEVVVPGDISSAAFWLVAGLVVPNSKIVLKNVGINETRTGIIDVIKDMGGKIKLSDIDQVAKSATITVETSELKGTEIGGDIIPRLIDELPIITLLATQAQGKTVIRDAEELKVKETDRIQVVADALNAMGADIVPTEDGMIITGKTPLHGAEVNTFGDHRIGMMTAIAALLVQDGEVDLQRAEAINTSYPSFFSDLEGLLHG.

Residues Lys20, Ser21, and Arg25 each coordinate 3-phosphoshikimate. Residue Lys20 participates in phosphoenolpyruvate binding. The phosphoenolpyruvate site is built by Gly92 and Arg120. 3-phosphoshikimate-binding residues include Ser166, Gln168, Asp312, and Lys339. Gln168 is a binding site for phosphoenolpyruvate. Catalysis depends on Asp312, which acts as the Proton acceptor. The phosphoenolpyruvate site is built by Arg343 and Arg385.

The protein belongs to the EPSP synthase family. Monomer.

Its subcellular location is the cytoplasm. It catalyses the reaction 3-phosphoshikimate + phosphoenolpyruvate = 5-O-(1-carboxyvinyl)-3-phosphoshikimate + phosphate. It functions in the pathway metabolic intermediate biosynthesis; chorismate biosynthesis; chorismate from D-erythrose 4-phosphate and phosphoenolpyruvate: step 6/7. Catalyzes the transfer of the enolpyruvyl moiety of phosphoenolpyruvate (PEP) to the 5-hydroxyl of shikimate-3-phosphate (S3P) to produce enolpyruvyl shikimate-3-phosphate and inorganic phosphate. The polypeptide is 3-phosphoshikimate 1-carboxyvinyltransferase (Streptococcus thermophilus (strain CNRZ 1066)).